The sequence spans 250 residues: Ribosomal RNA small subunit methyltransferase G (250 aa).

S-adenosyl-L-methionine is bound by residues Gly-78, Leu-83, 129–130 (AE), and Arg-144. Positions 224–250 (IAAPRKRGGQQRRAGHARGTSNRRRGT) are disordered. Over residues 227–250 (PRKRGGQQRRAGHARGTSNRRRGT) the composition is skewed to basic residues.

The protein belongs to the methyltransferase superfamily. RNA methyltransferase RsmG family.

It is found in the cytoplasm. Specifically methylates the N7 position of guanine in position 518 of 16S rRNA. The protein is Ribosomal RNA small subunit methyltransferase G of Nocardioides sp. (strain ATCC BAA-499 / JS614).